We begin with the raw amino-acid sequence, 303 residues long: Ornithine carbamoyltransferase (303 aa).

Carbamoyl phosphate is bound by residues 52–55 (STRT), Gln79, Arg103, and 130–133 (HPCQ). L-ornithine-binding positions include Asn161, Asp222, and 226–227 (SM). Residues 262–263 (CL) and Arg290 contribute to the carbamoyl phosphate site.

Belongs to the aspartate/ornithine carbamoyltransferase superfamily. OTCase family.

Its subcellular location is the cytoplasm. The enzyme catalyses carbamoyl phosphate + L-ornithine = L-citrulline + phosphate + H(+). Its pathway is amino-acid biosynthesis; L-arginine biosynthesis; L-arginine from L-ornithine and carbamoyl phosphate: step 1/3. Its function is as follows. Reversibly catalyzes the transfer of the carbamoyl group from carbamoyl phosphate (CP) to the N(epsilon) atom of ornithine (ORN) to produce L-citrulline. The chain is Ornithine carbamoyltransferase from Geobacter metallireducens (strain ATCC 53774 / DSM 7210 / GS-15).